Reading from the N-terminus, the 151-residue chain is UPF0756 membrane protein GK2737 (151 aa).

A run of 4 helical transmembrane segments spans residues Val-5–Val-25, Trp-53–Phe-73, Ser-79–Ala-99, and Ile-121–Ala-141.

The protein belongs to the UPF0756 family.

The protein resides in the cell membrane. In Geobacillus kaustophilus (strain HTA426), this protein is UPF0756 membrane protein GK2737.